A 274-amino-acid chain; its full sequence is Ribosomal RNA small subunit methyltransferase A (274 aa).

N20, L22, G47, E68, D90, and N110 together coordinate S-adenosyl-L-methionine.

The protein belongs to the class I-like SAM-binding methyltransferase superfamily. rRNA adenine N(6)-methyltransferase family. RsmA subfamily.

The protein resides in the cytoplasm. It catalyses the reaction adenosine(1518)/adenosine(1519) in 16S rRNA + 4 S-adenosyl-L-methionine = N(6)-dimethyladenosine(1518)/N(6)-dimethyladenosine(1519) in 16S rRNA + 4 S-adenosyl-L-homocysteine + 4 H(+). Its function is as follows. Specifically dimethylates two adjacent adenosines (A1518 and A1519) in the loop of a conserved hairpin near the 3'-end of 16S rRNA in the 30S particle. May play a critical role in biogenesis of 30S subunits. The protein is Ribosomal RNA small subunit methyltransferase A of Chlorobaculum parvum (strain DSM 263 / NCIMB 8327) (Chlorobium vibrioforme subsp. thiosulfatophilum).